The chain runs to 134 residues: Arsenate reductase (134 aa).

Residues C11, C83, and C90 each act as nucleophile in the active site. 2 cysteine pairs are disulfide-bonded: C11–C83 and C83–C90.

This sequence belongs to the low molecular weight phosphotyrosine protein phosphatase family. Thioredoxin-coupled ArsC subfamily.

It is found in the cytoplasm. It carries out the reaction arsenate + [thioredoxin]-dithiol + H(+) = arsenite + [thioredoxin]-disulfide + H2O. In terms of biological role, catalyzes the reduction of arsenate [As(V)] to arsenite [As(III)]. This Bacillus cereus (strain Q1) protein is Arsenate reductase.